Here is a 160-residue protein sequence, read N- to C-terminus: ADP-ribose 1''-phosphate phosphatase (160 aa).

Positions 1 to 160 (MTVKYIRGDL…SLDFNVYVID (160 aa)) constitute a Macro domain. Substrate contacts are provided by residues 8-10 (GDL), 26-28 (ACN), 33-38 (WGGGIA), and 130-136 (INSGIFG).

The protein belongs to the POA1 family.

It carries out the reaction ADP-alpha-D-ribose 1''-phosphate + H2O = ADP-D-ribose + phosphate. Its function is as follows. Highly specific phosphatase involved in the metabolism of ADP-ribose 1''-phosphate (Appr1p) which is produced as a consequence of tRNA splicing. Removes ADP-ribose from glutamate residues in proteins bearing a single ADP-ribose moiety. Inactive towards proteins bearing poly-ADP-ribose. This Lodderomyces elongisporus (strain ATCC 11503 / CBS 2605 / JCM 1781 / NBRC 1676 / NRRL YB-4239) (Yeast) protein is ADP-ribose 1''-phosphate phosphatase (POA1).